The following is a 421-amino-acid chain: Gamma-glutamyl phosphate reductase (421 aa).

Belongs to the gamma-glutamyl phosphate reductase family.

It localises to the cytoplasm. It catalyses the reaction L-glutamate 5-semialdehyde + phosphate + NADP(+) = L-glutamyl 5-phosphate + NADPH + H(+). It participates in amino-acid biosynthesis; L-proline biosynthesis; L-glutamate 5-semialdehyde from L-glutamate: step 2/2. Catalyzes the NADPH-dependent reduction of L-glutamate 5-phosphate into L-glutamate 5-semialdehyde and phosphate. The product spontaneously undergoes cyclization to form 1-pyrroline-5-carboxylate. This is Gamma-glutamyl phosphate reductase from Pseudomonas syringae pv. tomato (strain ATCC BAA-871 / DC3000).